The sequence spans 102 residues: Small ribosomal subunit protein uS10 (102 aa).

Belongs to the universal ribosomal protein uS10 family. Part of the 30S ribosomal subunit.

In terms of biological role, involved in the binding of tRNA to the ribosomes. The polypeptide is Small ribosomal subunit protein uS10 (Salinispora tropica (strain ATCC BAA-916 / DSM 44818 / JCM 13857 / NBRC 105044 / CNB-440)).